The following is a 331-amino-acid chain: Anthranilate phosphoribosyltransferase (331 aa).

Residues Gly81, 84–85 (GD), Ser89, 91–94 (NCST), 109–117 (KHGNRAVSS), and Ser121 contribute to the 5-phospho-alpha-D-ribose 1-diphosphate site. Residue Gly81 participates in anthranilate binding. Residue Ser93 participates in Mg(2+) binding. Residue Asn112 participates in anthranilate binding. Arg167 lines the anthranilate pocket. Asp226 and Glu227 together coordinate Mg(2+).

It belongs to the anthranilate phosphoribosyltransferase family. Homodimer. Mg(2+) is required as a cofactor.

The catalysed reaction is N-(5-phospho-beta-D-ribosyl)anthranilate + diphosphate = 5-phospho-alpha-D-ribose 1-diphosphate + anthranilate. It participates in amino-acid biosynthesis; L-tryptophan biosynthesis; L-tryptophan from chorismate: step 2/5. Its function is as follows. Catalyzes the transfer of the phosphoribosyl group of 5-phosphorylribose-1-pyrophosphate (PRPP) to anthranilate to yield N-(5'-phosphoribosyl)-anthranilate (PRA). The protein is Anthranilate phosphoribosyltransferase of Oleidesulfovibrio alaskensis (strain ATCC BAA-1058 / DSM 17464 / G20) (Desulfovibrio alaskensis).